The chain runs to 136 residues: Methylglyoxal synthase (136 aa).

The 136-residue stretch at 1–136 folds into the MGS-like domain; that stretch reads MKIALIAHDR…REVVREENEA (136 aa). Substrate-binding positions include H8, K12, 34–37, and 54–55; these read TGTT and SG. Catalysis depends on D60, which acts as the Proton donor/acceptor. Substrate is bound at residue H87.

It belongs to the methylglyoxal synthase family.

It carries out the reaction dihydroxyacetone phosphate = methylglyoxal + phosphate. Catalyzes the formation of methylglyoxal from dihydroxyacetone phosphate. The polypeptide is Methylglyoxal synthase (Brevibacillus brevis (strain 47 / JCM 6285 / NBRC 100599)).